Reading from the N-terminus, the 447-residue chain is Phosphatidylinositol N-acetylglucosaminyltransferase subunit A (447 aa).

Topologically, residues 1 to 387 are cytoplasmic; that stretch reads MAEPPKLRVL…NRSLLERLMR (387 aa). The helical transmembrane segment at 388 to 408 threads the bilayer; it reads FLSCGAWAGKLFCMVMILDYL. At 409–447 the chain is on the lumenal side; sequence LWRLLQLLQPDEDIEEAPDICLCHHRGVEVSEGLRKKIK.

The protein belongs to the glycosyltransferase group 1 family. Glycosyltransferase 4 subfamily. In terms of tissue distribution, expressed in roots, stems, leaves, flowers and pollen grains.

The protein resides in the endoplasmic reticulum membrane. It carries out the reaction a 1,2-diacyl-sn-glycero-3-phospho-(1D-myo-inositol) + UDP-N-acetyl-alpha-D-glucosamine = a 6-(N-acetyl-alpha-D-glucosaminyl)-1-(1,2-diacyl-sn-glycero-3-phospho)-1D-myo-inositol + UDP + H(+). The protein operates within glycolipid biosynthesis; glycosylphosphatidylinositol-anchor biosynthesis. Its function is as follows. Necessary for the synthesis of N-acetylglucosaminyl-phosphatidylinositol, the very early intermediate in GPI-anchor biosynthesis. Required for pollen germination and pollen tube growth. The chain is Phosphatidylinositol N-acetylglucosaminyltransferase subunit A from Arabidopsis thaliana (Mouse-ear cress).